A 295-amino-acid polypeptide reads, in one-letter code: Mycothiol acetyltransferase (295 aa).

Glutamate 30 lines the 1D-myo-inositol 2-(L-cysteinylamino)-2-deoxy-alpha-D-glucopyranoside pocket. 62–64 (LVV) provides a ligand contact to acetyl-CoA. The 159-residue stretch at 137 to 295 (VTVRAFRADS…DDDTHVQYRR (159 aa)) folds into the N-acetyltransferase domain. The 1D-myo-inositol 2-(L-cysteinylamino)-2-deoxy-alpha-D-glucopyranoside site is built by glutamate 165, lysine 209, and glutamate 227. Acetyl-CoA is bound by residues 231-233 (VGI) and 238-244 (QGRGLGK). Tyrosine 265 serves as a coordination point for 1D-myo-inositol 2-(L-cysteinylamino)-2-deoxy-alpha-D-glucopyranoside.

Belongs to the acetyltransferase family. MshD subfamily. As to quaternary structure, monomer.

It catalyses the reaction 1D-myo-inositol 2-(L-cysteinylamino)-2-deoxy-alpha-D-glucopyranoside + acetyl-CoA = mycothiol + CoA + H(+). Functionally, catalyzes the transfer of acetyl from acetyl-CoA to desacetylmycothiol (Cys-GlcN-Ins) to form mycothiol. The chain is Mycothiol acetyltransferase from Nocardioides sp. (strain ATCC BAA-499 / JS614).